Reading from the N-terminus, the 317-residue chain is Actin-related protein 2/3 complex subunit 2 (317 aa).

This sequence belongs to the ARPC2 family. As to quaternary structure, component of the Arp2/3 complex composed of arp2, act2, arc1/p41-ARC, arc2/p34-ARC, arc3/p21-ARC, arc4/p20-ARC and arc5/p16-ARC.

The protein localises to the cytoplasm. The protein resides in the cytoskeleton. It is found in the actin patch. Functionally, functions as actin-binding component of the Arp2/3 complex which is involved in regulation of actin polymerization and together with an activating nucleation-promoting factor (NPF) mediates the formation of branched actin networks. Seems to contact the mother actin filament. The protein is Actin-related protein 2/3 complex subunit 2 (arc2) of Schizosaccharomyces pombe (strain 972 / ATCC 24843) (Fission yeast).